Consider the following 149-residue polypeptide: Cytochrome c-type biogenesis protein CcmE (149 aa).

The Cytoplasmic portion of the chain corresponds to Met-1 to Arg-8. A helical; Signal-anchor for type II membrane protein transmembrane segment spans residues Leu-9 to Ala-29. Residues Leu-30–Tyr-149 lie on the Periplasmic side of the membrane. Positions 124 and 128 each coordinate heme.

Belongs to the CcmE/CycJ family.

It is found in the cell inner membrane. Functionally, heme chaperone required for the biogenesis of c-type cytochromes. Transiently binds heme delivered by CcmC and transfers the heme to apo-cytochromes in a process facilitated by CcmF and CcmH. The polypeptide is Cytochrome c-type biogenesis protein CcmE (Hahella chejuensis (strain KCTC 2396)).